The chain runs to 187 residues: Ribosome-recycling factor (187 aa).

It belongs to the RRF family.

It localises to the cytoplasm. Its function is as follows. Responsible for the release of ribosomes from messenger RNA at the termination of protein biosynthesis. May increase the efficiency of translation by recycling ribosomes from one round of translation to another. This chain is Ribosome-recycling factor, found in Rhodopseudomonas palustris (strain BisB5).